The following is a 165-amino-acid chain: uncharacterized protein (165 aa).

The disordered stretch occupies residues 68–107; sequence LEGAPEWAAPHPEEQRRSPPACSQHTPPLPSTPTGPPPCS. The segment covering 94 to 107 has biased composition (pro residues); the sequence is PPLPSTPTGPPPCS.

This is an uncharacterized protein from Homo sapiens (Human).